The following is an 832-amino-acid chain: SID1 transmembrane family member 2 (832 aa).

A signal peptide spans 1–18; the sequence is MIAWRLPLCVLLVASVES. Topologically, residues 19 to 293 are extracellular; the sequence is HLGALGPKNV…VSQAVTSEAY (275 aa). N-linked (GlcNAc...) asparagine glycans are attached at residues asparagine 27, asparagine 54, asparagine 60, asparagine 123, asparagine 141, and asparagine 165. The chain crosses the membrane as a helical span at residues 294 to 314; that stretch reads VGGMLFCLGIFLSFYLLTVLL. At 315-447 the chain is on the cytoplasmic side; the sequence is ACWENWRQRK…DKRVLRKKYQ (133 aa). Phosphoserine is present on residues serine 401, serine 403, and serine 404. The chain crosses the membrane as a helical span at residues 448–468; that stretch reads IYFWNIATIAVFYALPVVQLV. Residues 469–499 are Extracellular-facing; it reads ITYQTVVNVTGNQDICYYNFLCAHPLGNLSA. 2 N-linked (GlcNAc...) asparagine glycosylation sites follow: asparagine 476 and asparagine 496. A helical membrane pass occupies residues 500–520; it reads FNNILSNLGYILLGLLFLLII. Over 521–546 the chain is Cytoplasmic; the sequence is LQREINHNRALLRNDLYALECGIPKH. The helical transmembrane segment at 547–567 threads the bilayer; sequence FGLFYAMGTALMMEGLLSACY. Residues 568–605 are Extracellular-facing; that stretch reads HVCPNYTNFQFDTSFMYMIAGLCMLKLYQKRHPDINAS. N-linked (GlcNAc...) asparagine glycosylation is found at asparagine 572 and asparagine 603. A helical membrane pass occupies residues 606 to 626; that stretch reads AYSAYACLAIVIFFSVLGVVF. At 627–631 the chain is on the cytoplasmic side; that stretch reads GKGNT. Residues 632–652 traverse the membrane as a helical segment; the sequence is AFWIVFSVIHIISTLLLSTQL. Topologically, residues 653–688 are extracellular; that stretch reads YYMGRWKLDSGIFRRILHVLYTDCIRQCSGPLYTDR. A helical transmembrane segment spans residues 689–709; it reads MVLLVMGNIINWSLAAYGLIM. The Cytoplasmic portion of the chain corresponds to 710-715; sequence RPNDFA. The chain crosses the membrane as a helical span at residues 716 to 736; that stretch reads SYLLAIGICNLLLYFAFYIIM. Residues 737 to 746 are Extracellular-facing; the sequence is KLRSGERIKL. A helical membrane pass occupies residues 747 to 767; the sequence is IPLLCIVCTSVVWGFALFFFF. Residues 768 to 796 lie on the Cytoplasmic side of the membrane; it reads QGLSTWQKTPAESREHNRDCILLDFFDDH. Residues 797-817 form a helical membrane-spanning segment; it reads DIWHFLSSIAMFGSFLVLLTL. The Extracellular portion of the chain corresponds to 818 to 832; that stretch reads DDDLDTVQRDKIYVF.

This sequence belongs to the SID1 family. Interacts with adapter protein complex 1 (AP-1) and AP-2, but not AP-3 and AP-4. Interacts with LAMP2. In terms of processing, glycosylated. As to expression, widely expressed, including in the liver, brain and kidney (at protein level).

It is found in the lysosome membrane. The protein localises to the cell membrane. Mediates the translocation of RNA and DNA across the lysosomal membrane during RNA and DNA autophagy (RDA), a process in which RNA and DNA is directly imported into lysosomes in an ATP-dependent manner, and degraded. Involved in the uptake of single-stranded oligonucleotides by living cells, a process called gymnosis. In vitro, mediates the uptake of linear DNA more efficiently than that of circular DNA, but exhibits similar uptake efficacy toward RNA and DNA. Binds long double-stranded RNA (dsRNA) (500 - 700 base pairs), but not dsRNA shorter than 100 bp. This chain is SID1 transmembrane family member 2 (Sidt2), found in Mus musculus (Mouse).